Reading from the N-terminus, the 581-residue chain is Colicin-E2 (581 aa).

5 disordered regions span residues 1 to 74 (MSGG…SGGG), 242 to 269 (QTLS…NTRD), 293 to 320 (PDQV…EAAE), 421 to 488 (ADAA…IADK), and 513 to 566 (DLSK…MNNI). Positions 20–35 (INGGPTGLGVGGGASD) are enriched in gly residues. The span at 36-45 (GSGWSSENNP) shows a compositional bias: low complexity. The span at 46–74 (WGGGSGSGIHWGGGSGHGNGGGNGNSGGG) shows a compositional bias: gly residues. A compositionally biased stretch (polar residues) spans 242–251 (QTLSPGVTNN). Composition is skewed to basic and acidic residues over residues 296–320 (VKQR…EAAE), 429–452 (QERR…ESKR), and 464–475 (PVGDKWLDDAGK). The span at 518–527 (FKGSNKTNIQ) shows a compositional bias: polar residues. Basic and acidic residues predominate over residues 535 to 554 (RKKDQVGGRERFELHHDKPI). The Zn(2+) site is built by His-549, His-574, and His-578.

It belongs to the colicin/pyosin nuclease family.

Its function is as follows. This plasmid-coded bactericidal protein is an endonuclease active on both single- and double-stranded DNA but with undefined specificity. Colicins are polypeptide toxins produced by and active against E.coli and closely related bacteria. The protein is Colicin-E2 (col) of Escherichia coli.